The sequence spans 324 residues: ATP-dependent 6-phosphofructokinase (324 aa).

G15 is an ATP binding site. 25–29 (RGVVR) is an ADP binding site. ATP-binding positions include 76–77 (RF) and 106–109 (GDGS). D107 lines the Mg(2+) pocket. Residue 130 to 132 (TID) coordinates substrate. The active-site Proton acceptor is the D132. An ADP-binding site is contributed by R159. Substrate-binding positions include R167 and 174 to 176 (MGR). ADP contacts are provided by residues 190 to 192 (GCE), K216, and 218 to 220 (KRH). Substrate contacts are provided by residues E227, R248, and 254-257 (HIQR).

This sequence belongs to the phosphofructokinase type A (PFKA) family. ATP-dependent PFK group I subfamily. Prokaryotic clade 'B1' sub-subfamily. Homotetramer. The cofactor is Mg(2+).

It localises to the cytoplasm. The catalysed reaction is beta-D-fructose 6-phosphate + ATP = beta-D-fructose 1,6-bisphosphate + ADP + H(+). It functions in the pathway carbohydrate degradation; glycolysis; D-glyceraldehyde 3-phosphate and glycerone phosphate from D-glucose: step 3/4. Allosterically activated by ADP and other diphosphonucleosides, and allosterically inhibited by phosphoenolpyruvate. In terms of biological role, catalyzes the phosphorylation of D-fructose 6-phosphate to fructose 1,6-bisphosphate by ATP, the first committing step of glycolysis. The chain is ATP-dependent 6-phosphofructokinase from Actinobacillus pleuropneumoniae serotype 5b (strain L20).